The following is a 417-amino-acid chain: Hydroxysteroid dehydrogenase-like protein 2 (417 aa).

NADP(+)-binding positions include 17 to 23 (GASRGIG), lysine 42, and aspartate 74. The Proton acceptor role is filled by tyrosine 168. An NADP(+)-binding site is contributed by lysine 172. The SCP2 domain occupies 306–414 (SSPLQETFKA…KLEKILGQMN (109 aa)).

It belongs to the short-chain dehydrogenases/reductases (SDR) family.

The protein localises to the peroxisome. It localises to the mitochondrion. Its function is as follows. Has apparently no steroid dehydrogenase activity. Might act as a metabolic regulator that affects systemic adaptation to nutritional cues. In Xenopus tropicalis (Western clawed frog), this protein is Hydroxysteroid dehydrogenase-like protein 2 (hsdl2).